A 600-amino-acid polypeptide reads, in one-letter code: UvrABC system protein C (600 aa).

A GIY-YIG domain is found at 15–92 (EKAGCYLMKD…IKKYQPYYNV (78 aa)). The UVR domain occupies 197–232 (QEVKKDLTNKMLQASADLEFERAGELRDQLKYIEET).

Belongs to the UvrC family. In terms of assembly, interacts with UvrB in an incision complex.

It localises to the cytoplasm. In terms of biological role, the UvrABC repair system catalyzes the recognition and processing of DNA lesions. UvrC both incises the 5' and 3' sides of the lesion. The N-terminal half is responsible for the 3' incision and the C-terminal half is responsible for the 5' incision. This Lactobacillus delbrueckii subsp. bulgaricus (strain ATCC BAA-365 / Lb-18) protein is UvrABC system protein C.